The primary structure comprises 356 residues: MSTVTITDLARENVRNLTPYQSARRLGGNGDVWLNANEYPTAVEFQLTQQTLNRYPECQPKVVIENYAQYAGVKPEQVLVSRGADEGIELLIRAFCEPGKDAILYCPPTYGMYSVSAETIGVECRTVPTLDNWQLDLQGISDKLDGVKVVYVCSPNNPTGQLINPQDFRTLLELTRGKAIVVADEAYIEFCPQASLAGWLAEYPHLAILRTLSKAFALAGLRCGFTLANEEVINLLMKVIAPYPLSTPVADIAAQALSPQGIVAMRERVAQIIAEREYLIAALQEIPCVEQVFDSETNYILARFKASSAVFKSLWDQGIILRDQNKQPSLSGCLRITVGTREESQRVIDALRAEQV.

N6-(pyridoxal phosphate)lysine is present on Lys-214.

Belongs to the class-II pyridoxal-phosphate-dependent aminotransferase family. Histidinol-phosphate aminotransferase subfamily. In terms of assembly, homodimer. Requires pyridoxal 5'-phosphate as cofactor.

The enzyme catalyses L-histidinol phosphate + 2-oxoglutarate = 3-(imidazol-4-yl)-2-oxopropyl phosphate + L-glutamate. It functions in the pathway amino-acid biosynthesis; L-histidine biosynthesis; L-histidine from 5-phospho-alpha-D-ribose 1-diphosphate: step 7/9. The protein is Histidinol-phosphate aminotransferase of Escherichia coli O127:H6 (strain E2348/69 / EPEC).